The following is a 93-amino-acid chain: Small ribosomal subunit protein uS19 (93 aa).

The protein belongs to the universal ribosomal protein uS19 family.

In terms of biological role, protein S19 forms a complex with S13 that binds strongly to the 16S ribosomal RNA. The chain is Small ribosomal subunit protein uS19 from Desulfitobacterium hafniense (strain Y51).